Here is a 208-residue protein sequence, read N- to C-terminus: Protein disulfide-isomerase A3 (208 aa).

The 44-residue stretch at Arg1–Lys44 folds into the Thioredoxin 1 domain. Residue Lys44 is modified to N6-succinyllysine. Lys49 carries the post-translational modification N6-acetyllysine. At Thr133 the chain carries Phosphothreonine. The region spanning Ser151–Lys208 is the Thioredoxin 2 domain. At Lys163 the chain carries N6-acetyllysine.

This sequence belongs to the protein disulfide isomerase family. As to quaternary structure, part of the major histocompatibility complex class I (MHC I) peptide loading complex composed of TAP1, TAP2, B2M, MHC heavy chain, TAPBP, PDIA3, and CALR. Interacts with ERP27 and CANX. Interacts with SERPINA2 and SERPINA1. Interacts with ATP2A2. In terms of processing, within the major histocompatibility complex class I (MHC I) peptide loading complex forms reversible disulfide-linked heterodimers with TAPBP as part of its protein folding chaperone activity. This is essential to assist the dynamic assembly of the MHC I complex with high affinity antigens in the endoplasmic reticulum. Phosphorylated. As to expression, in the caput epididymal spermatozoa, detected in the mid-peice and at low levels in the principal piece. In the cauda epididymal spermatozoa, detected at very low levels in the principal piece and not in the mid-piece (at protein level).

The protein resides in the endoplasmic reticulum. Its subcellular location is the endoplasmic reticulum lumen. It is found in the melanosome. It catalyses the reaction Catalyzes the rearrangement of -S-S- bonds in proteins.. In terms of biological role, protein disulfide isomerase that catalyzes the formation, isomerization, and reduction or oxidation of disulfide bonds in client proteins and functions as a protein folding chaperone. Core component of the major histocompatibility complex class I (MHC I) peptide loading complex where it functions as an essential folding chaperone for TAPBP. Through TAPBP, assists the dynamic assembly of the MHC I complex with high affinity antigens in the endoplasmic reticulum. Therefore, plays a crucial role in the presentation of antigens to cytotoxic T cells in adaptive immunity. This is Protein disulfide-isomerase A3 from Mesocricetus auratus (Golden hamster).